The sequence spans 322 residues: Phosphatidylserine decarboxylase proenzyme (322 aa).

Catalysis depends on charge relay system; for autoendoproteolytic cleavage activity residues D90, H147, and S254. S254 acts as the Schiff-base intermediate with substrate; via pyruvic acid; for decarboxylase activity in catalysis. At S254 the chain carries Pyruvic acid (Ser); by autocatalysis. Residues 293–322 (PDAEPAPLPAEEIEAEHDASPLVDDKKDQV) form a disordered region. A compositionally biased stretch (basic and acidic residues) spans 308-322 (EHDASPLVDDKKDQV).

Belongs to the phosphatidylserine decarboxylase family. PSD-B subfamily. Prokaryotic type I sub-subfamily. Heterodimer of a large membrane-associated beta subunit and a small pyruvoyl-containing alpha subunit. It depends on pyruvate as a cofactor. Is synthesized initially as an inactive proenzyme. Formation of the active enzyme involves a self-maturation process in which the active site pyruvoyl group is generated from an internal serine residue via an autocatalytic post-translational modification. Two non-identical subunits are generated from the proenzyme in this reaction, and the pyruvate is formed at the N-terminus of the alpha chain, which is derived from the carboxyl end of the proenzyme. The autoendoproteolytic cleavage occurs by a canonical serine protease mechanism, in which the side chain hydroxyl group of the serine supplies its oxygen atom to form the C-terminus of the beta chain, while the remainder of the serine residue undergoes an oxidative deamination to produce ammonia and the pyruvoyl prosthetic group on the alpha chain. During this reaction, the Ser that is part of the protease active site of the proenzyme becomes the pyruvoyl prosthetic group, which constitutes an essential element of the active site of the mature decarboxylase.

The protein resides in the cell membrane. It carries out the reaction a 1,2-diacyl-sn-glycero-3-phospho-L-serine + H(+) = a 1,2-diacyl-sn-glycero-3-phosphoethanolamine + CO2. It participates in phospholipid metabolism; phosphatidylethanolamine biosynthesis; phosphatidylethanolamine from CDP-diacylglycerol: step 2/2. Functionally, catalyzes the formation of phosphatidylethanolamine (PtdEtn) from phosphatidylserine (PtdSer). This Escherichia coli O45:K1 (strain S88 / ExPEC) protein is Phosphatidylserine decarboxylase proenzyme.